We begin with the raw amino-acid sequence, 277 residues long: Phosphatidylglycerol--prolipoprotein diacylglyceryl transferase (277 aa).

The next 4 membrane-spanning stretches (helical) occupy residues 18–38, 51–71, 89–109, and 116–136; these read ISVK…LLLA, IIVD…RIYY, IWHG…TAII, and ISFW…QAIG. Arginine 137 lines the a 1,2-diacyl-sn-glycero-3-phospho-(1'-sn-glycerol) pocket. The next 3 membrane-spanning stretches (helical) occupy residues 177-197, 205-225, and 235-255; these read QPTF…LLII, GELF…IEGM, and FRVS…IIIY.

This sequence belongs to the Lgt family.

It is found in the cell membrane. It catalyses the reaction L-cysteinyl-[prolipoprotein] + a 1,2-diacyl-sn-glycero-3-phospho-(1'-sn-glycerol) = an S-1,2-diacyl-sn-glyceryl-L-cysteinyl-[prolipoprotein] + sn-glycerol 1-phosphate + H(+). It participates in protein modification; lipoprotein biosynthesis (diacylglyceryl transfer). Catalyzes the transfer of the diacylglyceryl group from phosphatidylglycerol to the sulfhydryl group of the N-terminal cysteine of a prolipoprotein, the first step in the formation of mature lipoproteins. The sequence is that of Phosphatidylglycerol--prolipoprotein diacylglyceryl transferase from Listeria monocytogenes serotype 4b (strain CLIP80459).